The sequence spans 194 residues: Holliday junction branch migration complex subunit RuvA (194 aa).

Residues 1–64 are domain I; sequence MIARLSGILV…EDAQLLYGFG (64 aa). Residues 65 to 141 are domain II; the sequence is SDQERATFRQ…FAIDGGTALA (77 aa). The interval 141–144 is flexible linker; that stretch reads AGSN. The segment at 145 to 194 is domain III; sequence PAKSASSDVLNALLALGYNEREALAAVKQLPADIAVAEGIKLSLKSLSKT.

It belongs to the RuvA family. In terms of assembly, homotetramer. Forms an RuvA(8)-RuvB(12)-Holliday junction (HJ) complex. HJ DNA is sandwiched between 2 RuvA tetramers; dsDNA enters through RuvA and exits via RuvB. An RuvB hexamer assembles on each DNA strand where it exits the tetramer. Each RuvB hexamer is contacted by two RuvA subunits (via domain III) on 2 adjacent RuvB subunits; this complex drives branch migration. In the full resolvosome a probable DNA-RuvA(4)-RuvB(12)-RuvC(2) complex forms which resolves the HJ.

The protein resides in the cytoplasm. In terms of biological role, the RuvA-RuvB-RuvC complex processes Holliday junction (HJ) DNA during genetic recombination and DNA repair, while the RuvA-RuvB complex plays an important role in the rescue of blocked DNA replication forks via replication fork reversal (RFR). RuvA specifically binds to HJ cruciform DNA, conferring on it an open structure. The RuvB hexamer acts as an ATP-dependent pump, pulling dsDNA into and through the RuvAB complex. HJ branch migration allows RuvC to scan DNA until it finds its consensus sequence, where it cleaves and resolves the cruciform DNA. This is Holliday junction branch migration complex subunit RuvA from Methylobacillus flagellatus (strain ATCC 51484 / DSM 6875 / VKM B-1610 / KT).